The following is a 261-amino-acid chain: Syntaxin-7 (261 aa).

Serine 2 is subject to N-acetylserine. The Cytoplasmic portion of the chain corresponds to 2 to 238 (SYTPGVGGDP…DYQRKSRKTL (237 aa)). At threonine 4 the chain carries Phosphothreonine. A Phosphoserine modification is found at serine 45. A coiled-coil region spans residues 47–69 (ELRQQLQQKQQYTNQLTKETDKY). Serine 75 bears the Phosphoserine mark. Threonine 79 carries the phosphothreonine modification. A phosphoserine mark is found at serine 125, serine 126, serine 129, and serine 205. The interval 129 to 148 (SGSFPEDSSKERNLVSWESQ) is disordered. The t-SNARE coiled-coil homology domain occupies 165-227 (LRLIHERESS…QQANQQLSRA (63 aa)). The helical; Anchor for type IV membrane protein transmembrane segment at 239 to 259 (CIIILILVIGVVIIGLIIWGL) threads the bilayer. Topologically, residues 260-261 (NR) are vesicular.

It belongs to the syntaxin family. In terms of assembly, forms a SNARE complex with VTI1B, STX8 and VAMP8 which functions in the homotypic fusion of late endosomes. Component of the SNARE complex composed of STX7, STX8, VAMP7 and VTI1B that is required for heterotypic fusion of late endosomes with lysosomes. Interacts with VPS11, VPS16 and VPS18. Interacts with VPS33A. Interacts with TPC1.

Its subcellular location is the early endosome membrane. Its function is as follows. May be involved in protein trafficking from the plasma membrane to the early endosome (EE) as well as in homotypic fusion of endocytic organelles. Mediates the endocytic trafficking from early endosomes to late endosomes and lysosomes. The polypeptide is Syntaxin-7 (STX7) (Pongo abelii (Sumatran orangutan)).